We begin with the raw amino-acid sequence, 181 residues long: Early E3 20.3 kDa glycoprotein (181 aa).

Asn29, Asn57, Asn70, and Asn75 each carry an N-linked (GlcNAc...) asparagine; by host glycan.

This sequence belongs to the adenoviridae E3_20 family.

Its function is as follows. E3 proteins seem to be dispensable for virus growth in tissue culture cells. They are potentially important for virus growth under special conditions; E3 region may help adenoviruses to evade the immune surveillance of the host. The chain is Early E3 20.3 kDa glycoprotein from Homo sapiens (Human).